A 660-amino-acid chain; its full sequence is DNA ligase (660 aa).

NAD(+) contacts are provided by residues 33-37 (DFVYD), 82-83 (SL), and Glu110. Catalysis depends on Lys112, which acts as the N6-AMP-lysine intermediate. Positions 133, 167, 281, and 305 each coordinate NAD(+). The Zn(2+) site is built by Cys396, Cys399, Cys412, and Cys417. A BRCT domain is found at 583 to 660 (DENKLLVGKK…SFEDIKSYLD (78 aa)).

This sequence belongs to the NAD-dependent DNA ligase family. LigA subfamily. Mg(2+) is required as a cofactor. The cofactor is Mn(2+).

The catalysed reaction is NAD(+) + (deoxyribonucleotide)n-3'-hydroxyl + 5'-phospho-(deoxyribonucleotide)m = (deoxyribonucleotide)n+m + AMP + beta-nicotinamide D-nucleotide.. DNA ligase that catalyzes the formation of phosphodiester linkages between 5'-phosphoryl and 3'-hydroxyl groups in double-stranded DNA using NAD as a coenzyme and as the energy source for the reaction. It is essential for DNA replication and repair of damaged DNA. The protein is DNA ligase of Borreliella afzelii (strain PKo) (Borrelia afzelii).